A 224-amino-acid polypeptide reads, in one-letter code: Putative N-acetylmannosamine-6-phosphate 2-epimerase (224 aa).

It belongs to the NanE family.

It catalyses the reaction an N-acyl-D-glucosamine 6-phosphate = an N-acyl-D-mannosamine 6-phosphate. It participates in amino-sugar metabolism; N-acetylneuraminate degradation; D-fructose 6-phosphate from N-acetylneuraminate: step 3/5. Its function is as follows. Converts N-acetylmannosamine-6-phosphate (ManNAc-6-P) to N-acetylglucosamine-6-phosphate (GlcNAc-6-P). The chain is Putative N-acetylmannosamine-6-phosphate 2-epimerase from Staphylococcus carnosus (strain TM300).